The following is a 111-amino-acid chain: METSAKLKFSRLSPQKARLVADQVRGLPVEKALEILEFSPKKAAAIVRKVLDSAVANAEHNDGADIDALRVARIFVDEGPMLKRIRPRAKGRANRILKRTSHITVTVAEQQ.

The protein belongs to the universal ribosomal protein uL22 family. Part of the 50S ribosomal subunit.

In terms of biological role, this protein binds specifically to 23S rRNA; its binding is stimulated by other ribosomal proteins, e.g. L4, L17, and L20. It is important during the early stages of 50S assembly. It makes multiple contacts with different domains of the 23S rRNA in the assembled 50S subunit and ribosome. Functionally, the globular domain of the protein is located near the polypeptide exit tunnel on the outside of the subunit, while an extended beta-hairpin is found that lines the wall of the exit tunnel in the center of the 70S ribosome. The polypeptide is Large ribosomal subunit protein uL22 (Alkalilimnicola ehrlichii (strain ATCC BAA-1101 / DSM 17681 / MLHE-1)).